Reading from the N-terminus, the 239-residue chain is Small ribosomal subunit protein uS2 (239 aa).

It belongs to the universal ribosomal protein uS2 family.

In Synechococcus sp. (strain CC9902), this protein is Small ribosomal subunit protein uS2.